A 178-amino-acid chain; its full sequence is Inorganic pyrophosphatase (178 aa).

Lysine 30, arginine 44, and tyrosine 56 together coordinate substrate. Mg(2+) is bound by residues aspartate 66, aspartate 71, and aspartate 103. Residue tyrosine 142 participates in substrate binding.

The protein belongs to the PPase family. In terms of assembly, homohexamer. Mg(2+) serves as cofactor.

It localises to the cytoplasm. The enzyme catalyses diphosphate + H2O = 2 phosphate + H(+). Its function is as follows. Catalyzes the hydrolysis of inorganic pyrophosphate (PPi) forming two phosphate ions. This Bradyrhizobium diazoefficiens (strain JCM 10833 / BCRC 13528 / IAM 13628 / NBRC 14792 / USDA 110) protein is Inorganic pyrophosphatase.